The following is a 598-amino-acid chain: NADH-quinone oxidoreductase subunit C/D (598 aa).

Residues 1 to 189 form an NADH dehydrogenase I subunit C region; that stretch reads MTDSTTHDRE…DPFELTRQKQ (189 aa). An NADH dehydrogenase I subunit D region spans residues 213–598; the sequence is DFMFLNLGPN…IDFVMSDVDR (386 aa).

The protein in the N-terminal section; belongs to the complex I 30 kDa subunit family. This sequence in the C-terminal section; belongs to the complex I 49 kDa subunit family. NDH-1 is composed of 13 different subunits. Subunits NuoB, CD, E, F, and G constitute the peripheral sector of the complex.

It localises to the cell inner membrane. It carries out the reaction a quinone + NADH + 5 H(+)(in) = a quinol + NAD(+) + 4 H(+)(out). Functionally, NDH-1 shuttles electrons from NADH, via FMN and iron-sulfur (Fe-S) centers, to quinones in the respiratory chain. The immediate electron acceptor for the enzyme in this species is believed to be ubiquinone. Couples the redox reaction to proton translocation (for every two electrons transferred, four hydrogen ions are translocated across the cytoplasmic membrane), and thus conserves the redox energy in a proton gradient. The chain is NADH-quinone oxidoreductase subunit C/D from Edwardsiella ictaluri (strain 93-146).